A 66-amino-acid chain; its full sequence is Large ribosomal subunit protein bL33 (66 aa).

Belongs to the bacterial ribosomal protein bL33 family.

In Synechococcus sp. (strain CC9311), this protein is Large ribosomal subunit protein bL33.